The primary structure comprises 180 residues: Small ribosomal subunit protein uS4 (180 aa).

The S4 RNA-binding domain occupies 103 to 174; the sequence is RRLQTIVYKK…HPERMMIEKA (72 aa).

Belongs to the universal ribosomal protein uS4 family. As to quaternary structure, part of the 30S ribosomal subunit. Contacts protein S5. The interaction surface between S4 and S5 is involved in control of translational fidelity.

One of the primary rRNA binding proteins, it binds directly to 16S rRNA where it nucleates assembly of the body of the 30S subunit. Functionally, with S5 and S12 plays an important role in translational accuracy. In Pyrococcus abyssi (strain GE5 / Orsay), this protein is Small ribosomal subunit protein uS4.